The primary structure comprises 155 residues: MPVSLVIDNRQKQVEIEQKLIMLLEKAVITSLAYEGWDPDYEVSLSFVSNKEIQNLNRTYRGKDYATDVLSFPLVDDTDGFPMGEEKLLGDVVISVEKAVEQAKEYQHSFEREMGFLMVHSLFHLMGYDHLEETEAQEMRKREEIVLTEMGLVRE.

The Zn(2+) site is built by histidine 120, histidine 124, and histidine 130.

It belongs to the endoribonuclease YbeY family. The cofactor is Zn(2+).

It is found in the cytoplasm. Its function is as follows. Single strand-specific metallo-endoribonuclease involved in late-stage 70S ribosome quality control and in maturation of the 3' terminus of the 16S rRNA. This is Endoribonuclease YbeY from Alkaliphilus metalliredigens (strain QYMF).